A 503-amino-acid polypeptide reads, in one-letter code: Endoglycoceramidase (503 aa).

The N-terminal stretch at 1–21 (MAETQPLVFVLMSISAILTAG) is a signal peptide. Residues asparagine 72, asparagine 108, and asparagine 205 are each glycosylated (N-linked (GlcNAc...) asparagine). The Proton donor role is filled by glutamate 239. N-linked (GlcNAc...) asparagine glycosylation is found at asparagine 307, asparagine 409, and asparagine 485.

The protein belongs to the glycosyl hydrolase 5 (cellulase A) family.

It is found in the secreted. Its subcellular location is the nematocyst. It carries out the reaction an oligoglycosyl-(1-&gt;4)-beta-D-glucosyl-(1&lt;-&gt;1)-ceramide + H2O = an oligoglycosyl-(1-&gt;4)-D-glucose + an N-acyl-sphingoid base. Completely inhibited by Hg(2+). Cu(2+) and zinc have no effect on enzyme activity. Lithium, potassium, manganese, Ni(2+), calcium, magnesium and EDTA have no significant effect on enzyme activity. Enzyme requires presence of detergents such as Triton X-100 and Lubrol PX for the hydrolysis of glycosphingolipids. Taurodeoxycholate strongly inhibits the enzyme activity and SDS completely inhibits the enzyme activity. In terms of biological role, hydrolysis of the glycosidic linkage between oligosaccharides and ceramides of glycosphingolipids, especially b-series polysialogangliosides. The sequence is that of Endoglycoceramidase from Cyanea nozakii (Jellyfish).